The sequence spans 369 residues: Succinyl-diaminopimelate desuccinylase (369 aa).

H77 contributes to the Zn(2+) binding site. D79 is an active-site residue. D103 lines the Zn(2+) pocket. E136 (proton acceptor) is an active-site residue. Zn(2+) contacts are provided by E137, E165, and H345.

Belongs to the peptidase M20A family. It depends on Zn(2+) as a cofactor. Requires Co(2+) as cofactor.

The catalysed reaction is N-succinyl-(2S,6S)-2,6-diaminopimelate + H2O = (2S,6S)-2,6-diaminopimelate + succinate. Its pathway is amino-acid biosynthesis; L-lysine biosynthesis via DAP pathway; LL-2,6-diaminopimelate from (S)-tetrahydrodipicolinate (succinylase route): step 3/3. The sequence is that of Succinyl-diaminopimelate desuccinylase (dapE) from Corynebacterium glutamicum (strain ATCC 13032 / DSM 20300 / JCM 1318 / BCRC 11384 / CCUG 27702 / LMG 3730 / NBRC 12168 / NCIMB 10025 / NRRL B-2784 / 534).